The primary structure comprises 291 residues: Ribosomal RNA small subunit methyltransferase A (291 aa).

N27, L29, G54, E75, D100, and N125 together coordinate S-adenosyl-L-methionine.

Belongs to the class I-like SAM-binding methyltransferase superfamily. rRNA adenine N(6)-methyltransferase family. RsmA subfamily.

The protein resides in the cytoplasm. It catalyses the reaction adenosine(1518)/adenosine(1519) in 16S rRNA + 4 S-adenosyl-L-methionine = N(6)-dimethyladenosine(1518)/N(6)-dimethyladenosine(1519) in 16S rRNA + 4 S-adenosyl-L-homocysteine + 4 H(+). Its function is as follows. Specifically dimethylates two adjacent adenosines (A1518 and A1519) in the loop of a conserved hairpin near the 3'-end of 16S rRNA in the 30S particle. May play a critical role in biogenesis of 30S subunits. The polypeptide is Ribosomal RNA small subunit methyltransferase A (Streptococcus mutans serotype c (strain ATCC 700610 / UA159)).